The sequence spans 567 residues: TGF-beta receptor type-2 (567 aa).

A signal peptide spans 1–23; the sequence is MGRGLLRGLWPLHIVLWTRIAST. Over 24–166 the chain is Extracellular; it reads IPPHVPKSVN…SPDLLLVIIQ (143 aa). 6 cysteine pairs are disulfide-bonded: C51–C84, C54–C71, C61–C67, C77–C101, C121–C136, and C138–C143. N-linked (GlcNAc...) asparagine glycans are attached at residues N70 and N94. A helical membrane pass occupies residues 167-187; that stretch reads VTGVSLLPPLGIAIAVIIIFY. At 188 to 567 the chain is on the cytoplasmic side; that stretch reads CYRVHRQQKL…PEDGSLNTTK (380 aa). Residues 244–546 enclose the Protein kinase domain; sequence IELDTLVGKG…RFSELEHPER (303 aa). ATP is bound by residues 250 to 258 and K277; that span reads VGKGRFAEV. D379 acts as the Proton acceptor in catalysis. 3 positions are modified to phosphoserine: S409, S548, and S553. Residues 545–567 form a disordered region; the sequence is ERLSGRSCSQEKIPEDGSLNTTK.

It belongs to the protein kinase superfamily. TKL Ser/Thr protein kinase family. TGFB receptor subfamily. Homodimer. Heterohexamer; TGFB1, TGFB2 and TGFB3 homodimeric ligands assemble a functional receptor composed of two TGFBR1 and TGFBR2 heterodimers to form a ligand-receptor heterohexamer. The respective affinity of TGFRB1 and TGFRB2 for the ligands may modulate the kinetics of assembly of the receptor and may explain the different biological activities of TGFB1, TGFB2 and TGFB3. Component of a complex composed of TSC22D1 (via N-terminus), TGFBR1 and TGFBR2; the interaction between TSC22D1 and TGFBR1 is inhibited by SMAD7 and promoted by TGFB1. Interacts with DAXX. Interacts with DYNLT4. Interacts with ZFYVE9; ZFYVE9 recruits SMAD2 and SMAD3 to the TGF-beta receptor. Interacts with and is activated by SCUBE3; this interaction does not affect TGFB1-binding to TGFBR2. Interacts with VPS39; this interaction is independent of the receptor kinase activity and of the presence of TGF-beta. Interacts with CLU. Mg(2+) serves as cofactor. Requires Mn(2+) as cofactor. Post-translationally, phosphorylated on a Ser/Thr residue in the cytoplasmic domain. Widely expressed in adult. Expressed primarily in mesenchyme and epidermis of the midgestational fetus.

Its subcellular location is the cell membrane. The protein localises to the membrane raft. It catalyses the reaction L-threonyl-[receptor-protein] + ATP = O-phospho-L-threonyl-[receptor-protein] + ADP + H(+). The catalysed reaction is L-seryl-[receptor-protein] + ATP = O-phospho-L-seryl-[receptor-protein] + ADP + H(+). Its function is as follows. Transmembrane serine/threonine kinase forming with the TGF-beta type I serine/threonine kinase receptor, TGFBR1, the non-promiscuous receptor for the TGF-beta cytokines TGFB1, TGFB2 and TGFB3. Transduces the TGFB1, TGFB2 and TGFB3 signal from the cell surface to the cytoplasm and is thus regulating a plethora of physiological and pathological processes including cell cycle arrest in epithelial and hematopoietic cells, control of mesenchymal cell proliferation and differentiation, wound healing, extracellular matrix production, immunosuppression and carcinogenesis. The formation of the receptor complex composed of 2 TGFBR1 and 2 TGFBR2 molecules symmetrically bound to the cytokine dimer results in the phosphorylation and the activation of TGFRB1 by the constitutively active TGFBR2. Activated TGFBR1 phosphorylates SMAD2 which dissociates from the receptor and interacts with SMAD4. The SMAD2-SMAD4 complex is subsequently translocated to the nucleus where it modulates the transcription of the TGF-beta-regulated genes. This constitutes the canonical SMAD-dependent TGF-beta signaling cascade. Also involved in non-canonical, SMAD-independent TGF-beta signaling pathways. Has transforming growth factor beta-activated receptor activity. This is TGF-beta receptor type-2 (Tgfbr2) from Mus musculus (Mouse).